The sequence spans 210 residues: Outer-membrane lipoprotein LolB (210 aa).

An N-terminal signal peptide occupies residues Met1–Ser26. Cys27 carries N-palmitoyl cysteine lipidation. Cys27 is lipidated: S-diacylglycerol cysteine.

It belongs to the LolB family. In terms of assembly, monomer.

It is found in the cell outer membrane. Plays a critical role in the incorporation of lipoproteins in the outer membrane after they are released by the LolA protein. This is Outer-membrane lipoprotein LolB from Francisella tularensis subsp. holarctica (strain FTNF002-00 / FTA).